A 292-amino-acid chain; its full sequence is MNWQAVSVATKNEAIETVADILLQVGAQGVQINDHDAISVTAYYPDDEQLGETITAIQKALKHLSDIGMSVAPATITVNGIQQKDWEDNWKAYYHAERVTRHFTVVPSWETYHPNQIDELPIIMDPKLAFGTGTHETTRLMIQALENVVRGGESMIDVGTGSGVLAVAAKQLGVAHVLATDIDEMSVNVAKENLRLNPVAQDVTVVASDLLADVVISPVDLIVANILADVIERLIPQTTTLLKPGGLFLVSGIYDNIALHIEDVLRANDYTIVQKSQMGEWHGYIAQLKEKN.

Residues threonine 138, glycine 159, aspartate 181, and asparagine 225 each coordinate S-adenosyl-L-methionine.

Belongs to the methyltransferase superfamily. PrmA family.

Its subcellular location is the cytoplasm. It carries out the reaction L-lysyl-[protein] + 3 S-adenosyl-L-methionine = N(6),N(6),N(6)-trimethyl-L-lysyl-[protein] + 3 S-adenosyl-L-homocysteine + 3 H(+). Functionally, methylates ribosomal protein L11. The polypeptide is Ribosomal protein L11 methyltransferase (Leuconostoc citreum (strain KM20)).